A 447-amino-acid chain; its full sequence is Pentatricopeptide repeat-containing protein At3g53170 (447 aa).

10 PPR repeats span residues 93 to 127 (RCKTYTKLFKVLGNCKQPDQASLLFEVMLSEGLKP), 128 to 158 (TIDVYTSLISVYGKSELLDKAFSTLEYMKSV), 164 to 198 (DVFTFTVLISCCCKLGRFDLVKSIVLEMSYLGVGC), 199 to 233 (STVTYNTIIDGYGKAGMFEEMESVLADMIEDGDSL), 235 to 269 (DVCTLNSIIGSYGNGRNMRKMESWYSRFQLMGVQP), 270 to 304 (DITTFNILILSFGKAGMYKKMCSVMDFMEKRFFSL), 305 to 339 (TTVTYNIVIETFGKAGRIEKMDDVFRKMKYQGVKP), 340 to 374 (NSITYCSLVNAYSKAGLVVKIDSVLRQIVNSDVVL), 375 to 409 (DTPFFNCIINAYGQAGDLATMKELYIQMEERKCKP), and 410 to 444 (DKITFATMIKTYTAHGIFDAVQELEKQMISSGENL).

This sequence belongs to the PPR family. P subfamily.

The polypeptide is Pentatricopeptide repeat-containing protein At3g53170 (Arabidopsis thaliana (Mouse-ear cress)).